A 293-amino-acid polypeptide reads, in one-letter code: 4-diphosphocytidyl-2-C-methyl-D-erythritol kinase (293 aa).

Residue Lys10 is part of the active site. 94-104 lines the ATP pocket; sequence PVSAGLAGGSS. Residue Asp136 is part of the active site.

Belongs to the GHMP kinase family. IspE subfamily.

It catalyses the reaction 4-CDP-2-C-methyl-D-erythritol + ATP = 4-CDP-2-C-methyl-D-erythritol 2-phosphate + ADP + H(+). Its pathway is isoprenoid biosynthesis; isopentenyl diphosphate biosynthesis via DXP pathway; isopentenyl diphosphate from 1-deoxy-D-xylulose 5-phosphate: step 3/6. Catalyzes the phosphorylation of the position 2 hydroxy group of 4-diphosphocytidyl-2C-methyl-D-erythritol. The polypeptide is 4-diphosphocytidyl-2-C-methyl-D-erythritol kinase (Listeria monocytogenes serotype 4b (strain CLIP80459)).